A 301-amino-acid polypeptide reads, in one-letter code: Phosphoribosylaminoimidazole-succinocarboxamide synthase (301 aa).

Belongs to the SAICAR synthetase family.

It carries out the reaction 5-amino-1-(5-phospho-D-ribosyl)imidazole-4-carboxylate + L-aspartate + ATP = (2S)-2-[5-amino-1-(5-phospho-beta-D-ribosyl)imidazole-4-carboxamido]succinate + ADP + phosphate + 2 H(+). It functions in the pathway purine metabolism; IMP biosynthesis via de novo pathway; 5-amino-1-(5-phospho-D-ribosyl)imidazole-4-carboxamide from 5-amino-1-(5-phospho-D-ribosyl)imidazole-4-carboxylate: step 1/2. This is Phosphoribosylaminoimidazole-succinocarboxamide synthase (ADE1) from Cyberlindnera jadinii (Torula yeast).